The primary structure comprises 555 residues: Spermine oxidase (555 aa).

Residues alanine 35, glutamate 55, arginine 63, 79–80, and valine 261 contribute to the FAD site; that span reads TW. The segment at 271 to 306 is disordered; sequence ARPRGPEIEPRGEGDHNHDTGEGGQGGEEPRGGRWD. Residues 274-291 are compositionally biased toward basic and acidic residues; sequence RGPEIEPRGEGDHNHDTG. FAD is bound by residues glutamate 519 and 528–529; that span reads TT.

This sequence belongs to the flavin monoamine oxidase family. FAD is required as a cofactor. As to expression, widely expressed. Expressed in human tumor cell lines. Isoform 4 is only found in an embryonal kidney cell line.

It localises to the cytoplasm. It is found in the nucleus. The enzyme catalyses spermine + O2 + H2O = 3-aminopropanal + spermidine + H2O2. Its pathway is amine and polyamine degradation; spermine degradation. With respect to regulation, inhibited at more than 90% by SL-11144, SL-11150 and SL-11158, at concentrations less than 1 uM. Its function is as follows. Flavoenzyme which catalyzes the oxidation of spermine to spermidine. Can also use N(1)-acetylspermine and spermidine as substrates, with different affinity depending on the isoform (isozyme) and on the experimental conditions. Plays an important role in the regulation of polyamine intracellular concentration and has the potential to act as a determinant of cellular sensitivity to the antitumor polyamine analogs. May contribute to beta-alanine production via aldehyde dehydrogenase conversion of 3-amino-propanal. The sequence is that of Spermine oxidase (SMOX) from Homo sapiens (Human).